The chain runs to 87 residues: Putative defensin-like protein 235 (87 aa).

A signal peptide spans 1 to 26 (MRSATFFLVSCVLMSFVLSHVKEVEA). Intrachain disulfides connect cysteine 46–cysteine 73, cysteine 54–cysteine 82, and cysteine 71–cysteine 84.

This sequence belongs to the DEFL family.

Its subcellular location is the secreted. This Arabidopsis thaliana (Mouse-ear cress) protein is Putative defensin-like protein 235 (SCRL26).